Reading from the N-terminus, the 255-residue chain is uncharacterized protein (255 aa).

The N-terminal stretch at methionine 1 to glycine 23 is a signal peptide. Cysteine 24 is lipidated: N-palmitoyl cysteine. Residue cysteine 24 is the site of S-diacylglycerol cysteine attachment.

This sequence belongs to the staphylococcal tandem lipoprotein family.

The protein resides in the cell membrane. This is an uncharacterized protein from Staphylococcus aureus (strain USA300).